We begin with the raw amino-acid sequence, 734 residues long: Photosystem I P700 chlorophyll a apoprotein A2 (734 aa).

Helical transmembrane passes span I46–A69, L135–Q158, L175–I199, I273–Y291, I330–Y353, A369–I395, A417–H439, and F517–V535. Residues C559 and C568 each coordinate [4Fe-4S] cluster. 2 consecutive transmembrane segments (helical) span residues A575–W596 and L643–I665. Residues H654, M662, and Y670 each contribute to the chlorophyll a site. W671 is a phylloquinone binding site. A helical transmembrane segment spans residues L707–A727.

It belongs to the PsaA/PsaB family. In terms of assembly, the PsaA/B heterodimer binds the P700 chlorophyll special pair and subsequent electron acceptors. PSI consists of a core antenna complex that captures photons, and an electron transfer chain that converts photonic excitation into a charge separation. The eukaryotic PSI reaction center is composed of at least 11 subunits. P700 is a chlorophyll a/chlorophyll a' dimer, A0 is one or more chlorophyll a, A1 is one or both phylloquinones and FX is a shared 4Fe-4S iron-sulfur center. is required as a cofactor.

The protein resides in the plastid. It localises to the chloroplast thylakoid membrane. It carries out the reaction reduced [plastocyanin] + hnu + oxidized [2Fe-2S]-[ferredoxin] = oxidized [plastocyanin] + reduced [2Fe-2S]-[ferredoxin]. PsaA and PsaB bind P700, the primary electron donor of photosystem I (PSI), as well as the electron acceptors A0, A1 and FX. PSI is a plastocyanin-ferredoxin oxidoreductase, converting photonic excitation into a charge separation, which transfers an electron from the donor P700 chlorophyll pair to the spectroscopically characterized acceptors A0, A1, FX, FA and FB in turn. Oxidized P700 is reduced on the lumenal side of the thylakoid membrane by plastocyanin. The polypeptide is Photosystem I P700 chlorophyll a apoprotein A2 (Vitis vinifera (Grape)).